A 33-amino-acid polypeptide reads, in one-letter code: Pardaxin P-5 (33 aa).

The protein belongs to the pardaxin family. Monomer. In aqueous solution exists as a tetramer.

The protein resides in the secreted. It is found in the target cell membrane. Exhibits unusual shark repellent and surfactant properties. Forms voltage-dependent, ion-permeable channels in membranes. At high concentration causes cell membrane lysis. This is Pardaxin P-5 from Pardachirus marmoratus (Finless sole).